The sequence spans 126 residues: Large ribosomal subunit protein bL12 (126 aa).

The protein belongs to the bacterial ribosomal protein bL12 family. In terms of assembly, homodimer. Part of the ribosomal stalk of the 50S ribosomal subunit. Forms a multimeric L10(L12)X complex, where L10 forms an elongated spine to which 2 to 4 L12 dimers bind in a sequential fashion. Binds GTP-bound translation factors.

Forms part of the ribosomal stalk which helps the ribosome interact with GTP-bound translation factors. Is thus essential for accurate translation. This chain is Large ribosomal subunit protein bL12, found in Nitrosococcus oceani (strain ATCC 19707 / BCRC 17464 / JCM 30415 / NCIMB 11848 / C-107).